The chain runs to 299 residues: Mitochondrial 2-oxodicarboxylate carrier (299 aa).

Solcar repeat units lie at residues 11–100 (REAS…YKKL), 107–196 (SPAL…VKNM), and 205–294 (LEFW…TYSW). The next 6 membrane-spanning stretches (helical) occupy residues 17–37 (IVAGGSAGLVEICLMHPLDVV), 70–89 (FGFYKGILPPILAETPKRAV), 113–133 (AIAGLGSGLTEAIVVNPFEVV), 167–187 (GLNKGLTATLGRHGVFNMVYF), 205–225 (LEFWRKFGIGLLSGTIASVIN), and 277–297 (LGPGGAVMLLVYEYTYSWLQE).

Belongs to the mitochondrial carrier (TC 2.A.29) family. In terms of tissue distribution, expressed in placenta, gall bladder and colon.

It is found in the mitochondrion inner membrane. It carries out the reaction 2-oxoadipate(in) + 2-oxoglutarate(out) = 2-oxoadipate(out) + 2-oxoglutarate(in). The enzyme catalyses hexanedioate(in) + 2-oxoglutarate(out) = hexanedioate(out) + 2-oxoglutarate(in). It catalyses the reaction L-2-aminoadipate(in) + 2-oxoglutarate(out) = L-2-aminoadipate(out) + 2-oxoglutarate(in). The catalysed reaction is glutarate(in) + 2-oxoglutarate(out) = glutarate(out) + 2-oxoglutarate(in). It carries out the reaction 2-oxoheptanedioate(in) + 2-oxoglutarate(out) = 2-oxoheptanedioate(out) + 2-oxoglutarate(in). The enzyme catalyses heptanedioate(in) + 2-oxoglutarate(out) = heptanedioate(out) + 2-oxoglutarate(in). It catalyses the reaction citrate(in) + 2-oxoglutarate(out) = citrate(out) + 2-oxoglutarate(in). Functionally, transports dicarboxylates across the inner membranes of mitochondria by a counter-exchange mechanism. Can transport 2-oxoadipate (2-oxohexanedioate), 2-oxoglutarate, adipate (hexanedioate), glutarate, and to a lesser extent, pimelate (heptanedioate), 2-oxopimelate (2-oxoheptanedioate), 2-aminoadipate (2-aminohexanedioate), oxaloacetate, and citrate. Plays a central role in catabolism of lysine, hydroxylysine, and tryptophan, by transporting common metabolite intermediates (such as 2-oxoadipate) into the mitochondria, where it is converted into acetyl-CoA and can enter the citric acid (TCA) cycle. The sequence is that of Mitochondrial 2-oxodicarboxylate carrier (SLC25A21) from Homo sapiens (Human).